Reading from the N-terminus, the 663-residue chain is Zeaxanthin epoxidase, chloroplastic (663 aa).

The N-terminal 50 residues, 1–50 (MYSTVFYTSVHPSTSAFSRKQLPLLISKDFPTELYHSLPCSRSLENGQIK), are a transit peptide targeting the chloroplast. FAD-binding positions include 81 to 109 (KVLV…LVFE) and 359 to 372 (TFSW…LLGD). One can recognise an FHA domain in the interval 547–611 (LVLSRDENMP…HGTWITDNEG (65 aa)).

FAD serves as cofactor. In terms of tissue distribution, higher expression in leaves than in roots.

The protein resides in the plastid. It localises to the chloroplast membrane. Its subcellular location is the chloroplast thylakoid membrane. It carries out the reaction all-trans-zeaxanthin + 4 reduced [2Fe-2S]-[ferredoxin] + 2 O2 + 4 H(+) = all-trans-violaxanthin + 4 oxidized [2Fe-2S]-[ferredoxin] + 2 H2O. It functions in the pathway plant hormone biosynthesis; abscisate biosynthesis. Functionally, converts zeaxanthin into antheraxanthin and subsequently violaxanthin. Involved in the epoxidation of zeaxanthin. Plays an important role in resistance to stresses, seed development and dormancy. In Nicotiana plumbaginifolia (Leadwort-leaved tobacco), this protein is Zeaxanthin epoxidase, chloroplastic (ABA2).